The sequence spans 396 residues: Purine ribonucleoside efflux pump NepI (396 aa).

At 1–21 (MSEFIAENRGADAITRPNWSA) the chain is on the cytoplasmic side. A helical transmembrane segment spans residues 22 to 42 (VFSVAFCVACLIIVEFLPVSL). The Periplasmic segment spans residues 43–54 (LTPMAQDLGISE). A helical transmembrane segment spans residues 55–75 (GVAGQSVTVTAFVAMFASLFI). The Cytoplasmic segment spans residues 76–85 (TQTIQATDRR). A helical membrane pass occupies residues 86–106 (YVVILFAVLLTLSCLLVSFAN). A topological domain (periplasmic) is located at residue Ser107. The helical transmembrane segment at 108-128 (FSLLLIGRACLGLALGGFWAI) threads the bilayer. Residues 129-147 (SASLTMRLVPPRTVPKALS) are Cytoplasmic-facing. The chain crosses the membrane as a helical span at residues 148 to 168 (VIFGAVSIALVIAAPLGGFLG). Residues 169-175 (ELIGWRN) are Periplasmic-facing. A helical membrane pass occupies residues 176 to 196 (VFNAAAAMGVLCIFWIIKSLP). Residues 197–215 (SLPGEPSHQKQNTFRLLQR) are Cytoplasmic-facing. Residues 216-236 (PGVMAGMIAIFMSFAGQFAFF) traverse the membrane as a helical segment. Residues 237–255 (TYIRPVYMNLAGFGVDGLT) are Periplasmic-facing. Residues 256 to 276 (LVLLSFGIASFVGTSLSSFIL) traverse the membrane as a helical segment. Residues 277–281 (KRSVK) lie on the Cytoplasmic side of the membrane. A helical transmembrane segment spans residues 282–302 (LALAGAPFVLALSALVLTLWG). Residues 303-305 (SDK) are Periplasmic-facing. Residues 306–326 (IVATGVAIIWGLTFALIPVGW) form a helical membrane-spanning segment. Residues 327–343 (STWITRSLADQAEKAGS) are Cytoplasmic-facing. The chain crosses the membrane as a helical span at residues 344–364 (IQVAVIQLANTCGAAIGGYAL). At 365–366 (DN) the chain is on the periplasmic side. Residues 367–387 (IGLTSPLMLSGTLMLLTALLV) form a helical membrane-spanning segment. Residues 388–396 (TAKVKMKKS) lie on the Cytoplasmic side of the membrane.

Belongs to the major facilitator superfamily. DHA1 family. NepI (TC 2.A.1.2.26) subfamily.

It localises to the cell inner membrane. It carries out the reaction inosine(in) + H(+)(out) = inosine(out) + H(+)(in). It catalyses the reaction guanosine(in) + H(+)(out) = guanosine(out) + H(+)(in). In terms of biological role, involved in the efflux of purine ribonucleosides, such as inosine and guanosine. In Escherichia coli O127:H6 (strain E2348/69 / EPEC), this protein is Purine ribonucleoside efflux pump NepI.